A 105-amino-acid polypeptide reads, in one-letter code: MNTLFGKAKEEAKPITPKSVDEYPEAPVSLGITLVNFTGDWRTFMPVIDESKCVKCYICWKYCPEPAIYIKEDGFVAIDYDYCKGCGICANECPTKAITMVREEK.

2 consecutive 4Fe-4S ferredoxin-type domains span residues 44–73 (FMPV…IKED) and 74–103 (GFVA…MVRE). Residues cysteine 53, cysteine 56, cysteine 59, cysteine 63, cysteine 83, cysteine 86, cysteine 89, and cysteine 93 each contribute to the [4Fe-4S] cluster site.

In terms of assembly, heterotetramer of one alpha, one beta, one delta and one gamma chain. [4Fe-4S] cluster is required as a cofactor.

The catalysed reaction is 3-methyl-2-oxobutanoate + 2 oxidized [2Fe-2S]-[ferredoxin] + CoA = 2-methylpropanoyl-CoA + 2 reduced [2Fe-2S]-[ferredoxin] + CO2 + H(+). In Pyrococcus horikoshii (strain ATCC 700860 / DSM 12428 / JCM 9974 / NBRC 100139 / OT-3), this protein is Ketoisovalerate oxidoreductase subunit VorD (vorD).